A 358-amino-acid chain; its full sequence is tRNA-specific 2-thiouridylase MnmA (358 aa).

Residues 7-14 (AMSGGVDS) and Leu33 each bind ATP. The Nucleophile role is filled by Cys101. Cys101 and Cys197 are disulfide-bonded. An ATP-binding site is contributed by Gly125. Residues 147–149 (KDQ) form an interaction with tRNA region. Cys197 serves as the catalytic Cysteine persulfide intermediate.

Belongs to the MnmA/TRMU family.

The protein localises to the cytoplasm. It carries out the reaction S-sulfanyl-L-cysteinyl-[protein] + uridine(34) in tRNA + AH2 + ATP = 2-thiouridine(34) in tRNA + L-cysteinyl-[protein] + A + AMP + diphosphate + H(+). Catalyzes the 2-thiolation of uridine at the wobble position (U34) of tRNA, leading to the formation of s(2)U34. This is tRNA-specific 2-thiouridylase MnmA from Rickettsia typhi (strain ATCC VR-144 / Wilmington).